Reading from the N-terminus, the 125-residue chain is Large-conductance mechanosensitive channel (125 aa).

The next 3 helical transmembrane spans lie at 19–39, 42–62, and 67–87; these read VGVI…SNLI, LIGI…IGSA, and GSFL…FLMV.

This sequence belongs to the MscL family. In terms of assembly, homopentamer.

It is found in the cell membrane. In terms of biological role, channel that opens in response to stretch forces in the membrane lipid bilayer. May participate in the regulation of osmotic pressure changes within the cell. This is Large-conductance mechanosensitive channel from Limosilactobacillus fermentum (strain NBRC 3956 / LMG 18251) (Lactobacillus fermentum).